The primary structure comprises 139 residues: Large ribosomal subunit protein uL16 (139 aa).

The span at 1–13 shows a compositional bias: basic residues; that stretch reads MLQPARRKYRKEQ. The interval 1–23 is disordered; that stretch reads MLQPARRKYRKEQKGRNTGISHS.

It belongs to the universal ribosomal protein uL16 family. As to quaternary structure, part of the 50S ribosomal subunit.

Binds 23S rRNA and is also seen to make contacts with the A and possibly P site tRNAs. The sequence is that of Large ribosomal subunit protein uL16 from Herminiimonas arsenicoxydans.